The chain runs to 100 residues: Large ribosomal subunit protein uL23 (100 aa).

This sequence belongs to the universal ribosomal protein uL23 family. In terms of assembly, part of the 50S ribosomal subunit. Contacts protein L29, and trigger factor when it is bound to the ribosome.

Functionally, one of the early assembly proteins it binds 23S rRNA. One of the proteins that surrounds the polypeptide exit tunnel on the outside of the ribosome. Forms the main docking site for trigger factor binding to the ribosome. This Pseudothermotoga lettingae (strain ATCC BAA-301 / DSM 14385 / NBRC 107922 / TMO) (Thermotoga lettingae) protein is Large ribosomal subunit protein uL23.